Consider the following 99-residue polypeptide: NADH-quinone oxidoreductase subunit K (99 aa).

Helical transmembrane passes span 2 to 22 (PVEY…LGVL), 28 to 48 (LILM…FLAF), and 60 to 80 (IAFF…AVVI).

It belongs to the complex I subunit 4L family. NDH-1 is composed of 14 different subunits. Subunits NuoA, H, J, K, L, M, N constitute the membrane sector of the complex.

It is found in the cell inner membrane. It carries out the reaction a quinone + NADH + 5 H(+)(in) = a quinol + NAD(+) + 4 H(+)(out). Functionally, NDH-1 shuttles electrons from NADH, via FMN and iron-sulfur (Fe-S) centers, to quinones in the respiratory chain. The immediate electron acceptor for the enzyme in this species is believed to be ubiquinone. Couples the redox reaction to proton translocation (for every two electrons transferred, four hydrogen ions are translocated across the cytoplasmic membrane), and thus conserves the redox energy in a proton gradient. The protein is NADH-quinone oxidoreductase subunit K of Anaeromyxobacter dehalogenans (strain 2CP-1 / ATCC BAA-258).